The sequence spans 65 residues: Conotoxin Lt5.1 (65 aa).

The signal sequence occupies residues 1–19 (MRCLPVFIILLLLIPSAPS). The propeptide occupies 20-48 (VDAQRKTKDDVPLASFHDNAKRTLKRLWN).

This sequence belongs to the conotoxin T superfamily. Post-translationally, contains 2 disulfide bonds that can be either 'C1-C3, C2-C4' or 'C1-C4, C2-C3', since these disulfide connectivities have been observed for conotoxins with cysteine framework V (for examples, see AC P0DQQ7 and AC P81755). In terms of tissue distribution, expressed by the venom duct.

It is found in the secreted. This is Conotoxin Lt5.1 from Conus litteratus (Lettered cone).